The primary structure comprises 354 residues: 3-dehydroquinate synthase (354 aa).

Residues G100–D104, T124–T125, K136, K145, and F163–T166 each bind NAD(+). 3 residues coordinate Zn(2+): E178, H242, and H256.

The protein belongs to the sugar phosphate cyclases superfamily. Dehydroquinate synthase family. NAD(+) is required as a cofactor. Requires Co(2+) as cofactor. The cofactor is Zn(2+).

The protein localises to the cytoplasm. It carries out the reaction 7-phospho-2-dehydro-3-deoxy-D-arabino-heptonate = 3-dehydroquinate + phosphate. It functions in the pathway metabolic intermediate biosynthesis; chorismate biosynthesis; chorismate from D-erythrose 4-phosphate and phosphoenolpyruvate: step 2/7. Its function is as follows. Catalyzes the conversion of 3-deoxy-D-arabino-heptulosonate 7-phosphate (DAHP) to dehydroquinate (DHQ). The protein is 3-dehydroquinate synthase of Staphylococcus aureus (strain MSSA476).